The primary structure comprises 100 residues: Small ribosomal subunit protein uS14c (100 aa).

It belongs to the universal ribosomal protein uS14 family. Part of the 30S ribosomal subunit.

Its subcellular location is the plastid. The protein localises to the chloroplast. In terms of biological role, binds 16S rRNA, required for the assembly of 30S particles. The chain is Small ribosomal subunit protein uS14c from Oenothera argillicola (Appalachian evening primrose).